A 145-amino-acid polypeptide reads, in one-letter code: Plastocyanin, chloroplastic (145 aa).

The transit peptide at 1–47 directs the protein to the chloroplast; that stretch reads MKATLRAPASRASAVRPVASLKAAAQRVASVAGVSVASLALTLAAHA. The Plastocyanin-like domain occupies 48 to 145; that stretch reads DATVKLGADS…AGMVGKIIVQ (98 aa). His-85, Cys-130, His-133, and Met-138 together coordinate Cu cation.

It belongs to the plastocyanin family. Cu(2+) serves as cofactor.

The protein resides in the plastid. It localises to the chloroplast thylakoid membrane. Participates in electron transfer between P700 and the cytochrome b6-f complex in photosystem I. The chain is Plastocyanin, chloroplastic (PETE) from Chlamydomonas reinhardtii (Chlamydomonas smithii).